The primary structure comprises 306 residues: MATH domain and coiled-coil domain-containing protein At3g29580 (306 aa).

In terms of domain architecture, MATH spans 6-132 (DNKFTWVIKN…NGEIKIVVEF (127 aa)). A coiled-coil region spans residues 253-298 (FKLDWLEKKLNEVLEKKEKEESYETRMREIEEEMKDLKAKALDVGA).

The sequence is that of MATH domain and coiled-coil domain-containing protein At3g29580 from Arabidopsis thaliana (Mouse-ear cress).